The chain runs to 379 residues: Homoserine O-succinyltransferase (379 aa).

Positions 51 to 360 (NAVLICHALS…DAPQGHDAFL (310 aa)) constitute an AB hydrolase-1 domain. Catalysis depends on S157, which acts as the Nucleophile. R227 serves as a coordination point for substrate. Catalysis depends on residues D323 and H356. D357 contacts substrate.

Belongs to the AB hydrolase superfamily. MetX family. In terms of assembly, homodimer.

It is found in the cytoplasm. The catalysed reaction is L-homoserine + succinyl-CoA = O-succinyl-L-homoserine + CoA. It functions in the pathway amino-acid biosynthesis; L-methionine biosynthesis via de novo pathway; O-succinyl-L-homoserine from L-homoserine: step 1/1. In terms of biological role, transfers a succinyl group from succinyl-CoA to L-homoserine, forming succinyl-L-homoserine. In Pseudomonas fluorescens (strain SBW25), this protein is Homoserine O-succinyltransferase.